Reading from the N-terminus, the 299-residue chain is Glycine--tRNA ligase alpha subunit (299 aa).

It belongs to the class-II aminoacyl-tRNA synthetase family. Tetramer of two alpha and two beta subunits.

The protein localises to the cytoplasm. The enzyme catalyses tRNA(Gly) + glycine + ATP = glycyl-tRNA(Gly) + AMP + diphosphate. This chain is Glycine--tRNA ligase alpha subunit, found in Desulforapulum autotrophicum (strain ATCC 43914 / DSM 3382 / VKM B-1955 / HRM2) (Desulfobacterium autotrophicum).